The following is a 139-amino-acid chain: Sec-independent protein translocase protein TatB (139 aa).

A helical membrane pass occupies residues methionine 1–glycine 21. Residues leucine 69–proline 139 form a disordered region. A compositionally biased stretch (pro residues) spans methionine 80–proline 95.

It belongs to the TatB family. The Tat system comprises two distinct complexes: a TatABC complex, containing multiple copies of TatA, TatB and TatC subunits, and a separate TatA complex, containing only TatA subunits. Substrates initially bind to the TatABC complex, which probably triggers association of the separate TatA complex to form the active translocon.

Its subcellular location is the cell inner membrane. Part of the twin-arginine translocation (Tat) system that transports large folded proteins containing a characteristic twin-arginine motif in their signal peptide across membranes. Together with TatC, TatB is part of a receptor directly interacting with Tat signal peptides. TatB may form an oligomeric binding site that transiently accommodates folded Tat precursor proteins before their translocation. In Stutzerimonas stutzeri (strain A1501) (Pseudomonas stutzeri), this protein is Sec-independent protein translocase protein TatB.